Here is a 108-residue protein sequence, read N- to C-terminus: Nucleoid-associated protein Bmul_1447/BMULJ_01796 (108 aa).

The tract at residues 84–108 (EATSQEKMSGMTSGLPLPPGFKLPF) is disordered. The span at 85-95 (ATSQEKMSGMT) shows a compositional bias: polar residues. Pro residues predominate over residues 99–108 (PLPPGFKLPF).

The protein belongs to the YbaB/EbfC family. As to quaternary structure, homodimer.

Its subcellular location is the cytoplasm. It is found in the nucleoid. Functionally, binds to DNA and alters its conformation. May be involved in regulation of gene expression, nucleoid organization and DNA protection. This Burkholderia multivorans (strain ATCC 17616 / 249) protein is Nucleoid-associated protein Bmul_1447/BMULJ_01796.